The sequence spans 366 residues: Ribosomal RNA large subunit methyltransferase M (366 aa).

S-adenosyl-L-methionine is bound by residues serine 188, 221–224 (CPGG), aspartate 240, aspartate 260, and aspartate 277. Residue lysine 306 is the Proton acceptor of the active site.

This sequence belongs to the class I-like SAM-binding methyltransferase superfamily. RNA methyltransferase RlmE family. RlmM subfamily. Monomer.

It is found in the cytoplasm. The enzyme catalyses cytidine(2498) in 23S rRNA + S-adenosyl-L-methionine = 2'-O-methylcytidine(2498) in 23S rRNA + S-adenosyl-L-homocysteine + H(+). Catalyzes the 2'-O-methylation at nucleotide C2498 in 23S rRNA. The polypeptide is Ribosomal RNA large subunit methyltransferase M (Pectobacterium atrosepticum (strain SCRI 1043 / ATCC BAA-672) (Erwinia carotovora subsp. atroseptica)).